The chain runs to 320 residues: V-set and transmembrane domain-containing protein 4 (320 aa).

The first 23 residues, 1–23, serve as a signal peptide directing secretion; sequence MRLLALAAAALLARAPAPEVCAA. Residues 24–155 form the Ig-like domain; it reads LNVTVSPGPV…SSATEMRVIS (132 aa). Topologically, residues 24–180 are extracellular; it reads LNVTVSPGPV…WAFFEDLYVY (157 aa). Residues Asn25, Asn41, Asn89, and Asn144 are each glycosylated (N-linked (GlcNAc...) asparagine). Cys46 and Cys127 are oxidised to a cystine. Residues 181–201 traverse the membrane as a helical segment; it reads AVLVCCVGILSILLFMLVIVW. At 202-320 the chain is on the cytoplasmic side; that stretch reads QSVFNKRKSR…AQILFEENKL (119 aa).

Post-translationally, proteolytically cleaved to generate a bioactive peptide.

The protein localises to the secreted. The protein resides in the cell membrane. Peptide Lv enhances L-type voltage-gated calcium channel (L-VGCC) currents in retinal photoreceptors. The chain is V-set and transmembrane domain-containing protein 4 (VSTM4) from Homo sapiens (Human).